The following is a 1873-amino-acid chain: Ankyrin repeat domain-containing protein 31 (1873 aa).

Disordered stretches follow at residues 1 to 27 (MEEGVQAPDWDSDETVIEGSVTESDLE) and 361 to 380 (EPLSNKRNSNSVTNSSDQET). Residues 361–379 (EPLSNKRNSNSVTNSSDQE) are compositionally biased toward polar residues. ANK repeat units lie at residues 488 to 517 (FGENLVYKAALHDDADLVHHCIKKGGNVNQ), 521 to 550 (AGWTALHEASVGGFYRTASELLKGGADVNI), and 554 to 583 (YQITPLHDAVMNGHYKVAELLLLNGADPLF). The disordered stretch occupies residues 707–740 (TGLRKGNLHNVKDPNTNVPKGIGRRKTQHKRTQV). Over residues 728-737 (IGRRKTQHKR) the composition is skewed to basic residues. 3 ANK repeats span residues 1154-1183 (RGESQLHLAVRRGNLPLVKALIESGADVNL), 1187-1216 (AGWTPLHEASNEGSIDIIVELLKAGAKVNC), and 1220-1249 (DGILPLHDAVANNHLKAAEILLQNGANPNQ). Disordered stretches follow at residues 1242 to 1263 (QNGANPNQKDQKQKSALDEADD), 1449 to 1482 (RSEISSEKDSQELTSLENLEHPQSGSLSPVSGSM), 1512 to 1549 (FSGNDMNSKQNGSDCTLDGFPKSRHSDGTEKNKLPSQP), and 1606 to 1634 (CDQDLSNYDPKRGNRKTSSQQSPTGASES). Positions 1250–1263 (KDQKQKSALDEADD) are enriched in basic and acidic residues. 2 stretches are compositionally biased toward polar residues: residues 1460-1482 (ELTSLENLEHPQSGSLSPVSGSM) and 1515-1525 (NDMNSKQNGSD). A compositionally biased stretch (basic and acidic residues) spans 1535 to 1544 (RHSDGTEKNK). The segment covering 1621 to 1632 (KTSSQQSPTGAS) has biased composition (polar residues). Residues 1683–1778 (KKALNYSTAP…TYLGKELLRY (96 aa)) enclose the RAMA domain.

Interacts with REC114; the interaction is direct. Interacts with IHO1.

It is found in the nucleus. The protein localises to the chromosome. In terms of biological role, required for DNA double-strand breaks (DSBs) formation during meiotic recombination. Regulates the spatial and temporal patterns of pre-DSB recombinosome assembly and recombination activity by acting as a scaffold that anchors REC114 and other factors to specific genomic locations, thereby regulating DSB formation. Plays a key role in recombination in the pseudoautosomal regions of sex chromosomes. This is Ankyrin repeat domain-containing protein 31 from Homo sapiens (Human).